The sequence spans 177 residues: MSRVAKAPVEVPSGVEVTLQGNDIQVKGPKGQMAWSCHRLVSLNQEEGTLTFEPRQQSTRAVALTGTTRALVQNMVTGVSEGFERRLELKGVGYRAQVQGSTLNLTLGFSHPVHYEIPEGVTIECPSQTEVVVKGADKQQVGQVAAQIRGYRPPEPYKGKGVRYADERVVLKEAKKK.

This sequence belongs to the universal ribosomal protein uL6 family. In terms of assembly, part of the 50S ribosomal subunit.

This protein binds to the 23S rRNA, and is important in its secondary structure. It is located near the subunit interface in the base of the L7/L12 stalk, and near the tRNA binding site of the peptidyltransferase center. In Halorhodospira halophila (strain DSM 244 / SL1) (Ectothiorhodospira halophila (strain DSM 244 / SL1)), this protein is Large ribosomal subunit protein uL6.